Reading from the N-terminus, the 299-residue chain is tRNA dimethylallyltransferase (299 aa).

ATP is bound at residue 11-18 (GPTAVGKT). 13–18 (TAVGKT) is a binding site for substrate. Positions 36–39 (DSQQ) are interaction with substrate tRNA.

It belongs to the IPP transferase family. Monomer. Mg(2+) serves as cofactor.

The catalysed reaction is adenosine(37) in tRNA + dimethylallyl diphosphate = N(6)-dimethylallyladenosine(37) in tRNA + diphosphate. Catalyzes the transfer of a dimethylallyl group onto the adenine at position 37 in tRNAs that read codons beginning with uridine, leading to the formation of N6-(dimethylallyl)adenosine (i(6)A). This is tRNA dimethylallyltransferase from Streptococcus pyogenes serotype M18 (strain MGAS8232).